The sequence spans 197 residues: Neurturin (197 aa).

Positions 1–19 (MQRWKAAALASVLCSSVLS) are cleaved as a signal peptide. Positions 20 to 95 (IWMCREGLLL…RAGPRRRRAR (76 aa)) are excised as a propeptide. The disordered stretch occupies residues 74-93 (TPWAGRPPGPRRRAGPRRRR). Over residues 82-93 (GPRRRAGPRRRR) the composition is skewed to basic residues. Cystine bridges form between Cys103–Cys165, Cys130–Cys194, and Cys134–Cys196. Arg149, Arg158, Arg160, and Gln162 together coordinate heparan sulfate group.

The protein belongs to the TGF-beta family. GDNF subfamily. Homodimer; disulfide-linked. Interacts with GFRA2 coreceptor and RET: forms a 2:2:2 ternary complex composed of NRTN ligand, GFRA2 and RET receptor. Also forms a 4:4:4 tetrameric complex composed of 4 copies of NRTN ligand, GFRA2 and RET receptor, which prevents endocytosis of RET.

Its subcellular location is the secreted. Growth factor that supports the survival of sympathetic neurons in culture. May regulate the development and maintenance of the CNS. Involved in the development of the neural crest. Might control the size of non-neuronal cell population such as haemopoietic cells. Acts by binding to its coreceptor, GFRA2, leading to autophosphorylation and activation of the RET receptor. Heparan sulfate-binding is required for signaling. In Homo sapiens (Human), this protein is Neurturin.